We begin with the raw amino-acid sequence, 205 residues long: Guanylate kinase (205 aa).

The region spanning G6–T184 is the Guanylate kinase-like domain. G13–G20 contacts ATP.

Belongs to the guanylate kinase family.

It localises to the cytoplasm. It catalyses the reaction GMP + ATP = GDP + ADP. Its function is as follows. Essential for recycling GMP and indirectly, cGMP. The protein is Guanylate kinase of Shouchella clausii (strain KSM-K16) (Alkalihalobacillus clausii).